Reading from the N-terminus, the 219-residue chain is Transmembrane protein 17B (219 aa).

A glycan (N-linked (GlcNAc...) asparagine) is linked at N26. 4 helical membrane-spanning segments follow: residues 51 to 71, 84 to 104, 116 to 136, and 147 to 167; these read MMLY…IITM, ILLT…LYIG, LAGF…FLLT, and LAVH…SFLV. N-linked (GlcNAc...) asparagine glycans are attached at residues N195 and N203.

Belongs to the TMEM17 family. As to quaternary structure, part of the tectonic-like complex (also named B9 complex).

Its subcellular location is the cell projection. It localises to the cilium membrane. Transmembrane component of the tectonic-like complex, a complex localized at the transition zone of primary cilia and acting as a barrier that prevents diffusion of transmembrane proteins between the cilia and plasma membranes. Required for ciliogenesis and sonic hedgehog/SHH signaling. The chain is Transmembrane protein 17B (Tmem17-b) from Xenopus tropicalis (Western clawed frog).